The chain runs to 249 residues: Neurotrophic factor BDNF precursor form (249 aa).

A signal peptide spans 1-18 (MTILFLTMVISYFGCMKA). The propeptide occupies 19 to 130 (APMKEVNVHG…AANMSMRVRR (112 aa)). Asn123 carries N-linked (GlcNAc...) asparagine glycosylation. 3 disulfide bridges follow: Cys143–Cys210, Cys188–Cys239, and Cys198–Cys241.

Belongs to the NGF-beta family. In terms of assembly, monomers and homodimers. Binds to NTRK2/TRKB. Can form heterodimers with other neurotrophin family members, such as NTF3 and NTF4 (in vitro), but the physiological relevance of this is not clear. BDNF precursor form: interacts with the heterodimer formed by NGFR and SORCS2. Mature BDNF has much lower affinity for the heterodimer formed by NGFR and SORCS2. In terms of processing, N-glycosylated and glycosulfated, contrary to mature BDNF. Mature BDNF is produced by proteolytic removal of the propeptide, catalyzed by a FURIN family member. In addition, the precursor form is proteolytically cleaved within the propeptide, but this is not an obligatory intermediate for the production of mature BDNF. Can be converted into mature BDNF by plasmin (PLG). Expressed in the dorsal root ganglion and the spinal cord (at protein level). Detected in brain, especially in brain cortex, hippocampus, midbrain and cerebellum.

It is found in the secreted. Important signaling molecule that activates signaling cascades downstream of NTRK2. During development, promotes the survival and differentiation of selected neuronal populations of the peripheral and central nervous systems. Participates in axonal growth, pathfinding and in the modulation of dendritic growth and morphology. Major regulator of synaptic transmission and plasticity at adult synapses in many regions of the CNS. The versatility of BDNF is emphasized by its contribution to a range of adaptive neuronal responses including long-term potentiation (LTP), long-term depression (LTD), certain forms of short-term synaptic plasticity, as well as homeostatic regulation of intrinsic neuronal excitability. Functionally, important signaling molecule that activates signaling cascades downstream of NTRK2. Activates signaling cascades via the heterodimeric receptor formed by NGFR and SORCS2. Signaling via NGFR and SORCS2 plays a role in synaptic plasticity and long-term depression (LTD). Binding to NGFR and SORCS2 promotes neuronal apoptosis. Promotes neuronal growth cone collapse. This is Neurotrophic factor BDNF precursor form (Bdnf) from Mus musculus (Mouse).